Here is a 271-residue protein sequence, read N- to C-terminus: Gasdermin bGSDM (271 aa).

Cys-7 carries the S-palmitoyl cysteine lipid modification. Transmembrane regions (beta stranded) follow at residues 74–90 (IAGT…GLSV), 102–120 (TLGV…FEFS), 168–185 (RINV…GLNL), and 194–210 (ANVK…TVSF).

The protein belongs to the bacterial gasdermin family. In terms of assembly, monomer. As to quaternary structure, forms large, homooligomeric ring-shaped pores when inserted in membranes. Post-translationally, palmitoylation helps stabilize the inactive state; may self palmitoylate. Palmitoylation plays a significant role in pore formation.

It localises to the cytoplasm. Its subcellular location is the cell inner membrane. The full-length protein before cleavage is inactive: intramolecular interactions between the N-terminal domain and the C-terminal region as well as the lipid modification, mediate autoinhibition. The pyroptosis-like-inducing activity is carried by the released N-terminal domain (Gasdermin bGSDM, N-terminus). Functionally, involved in defense against bacteriophages. When this probable 4 gene operon (bGSDM-FE772_23060-FE772_23065-FE772_23070) is inserted into E.coli it provides nearly 100-fold protection against phages T5 and T6 and about 8-fold against phage T4. The operon without bGSDM no longer protects against phage. Cleavage of this precursor by its dedicated protease(s) releases the active moiety (gasdermin bGSDM, N-terminus) which inserts into membranes, forming pores and triggering cell death. Pore-forming protein that causes membrane permeabilization via a pyroptosis-like activity. Makes ring-like pores when released. The sequence is that of Gasdermin bGSDM from Lysobacter enzymogenes.